We begin with the raw amino-acid sequence, 303 residues long: Probable 5-dehydro-4-deoxyglucarate dehydratase (303 aa).

It belongs to the DapA family.

It carries out the reaction 5-dehydro-4-deoxy-D-glucarate + H(+) = 2,5-dioxopentanoate + CO2 + H2O. It functions in the pathway carbohydrate acid metabolism; D-glucarate degradation; 2,5-dioxopentanoate from D-glucarate: step 2/2. This is Probable 5-dehydro-4-deoxyglucarate dehydratase from Acidovorax ebreus (strain TPSY) (Diaphorobacter sp. (strain TPSY)).